We begin with the raw amino-acid sequence, 350 residues long: Protein disulfide isomerase Creld2 (350 aa).

Residues 1 to 22 (MHLLLAAAFGLLLLLPPPGAVA) form the signal peptide. The short motif at 29–32 (CQRC) is the CXXC element. 4 disulfides stabilise this stretch: Cys-29-Cys-32, Cys-138-Cys-152, Cys-146-Cys-164, and Cys-166-Cys-175. The 43-residue stretch at 134–176 (DCQECQGGSERPCSGNGYCSGDGSRQGDGSCQCHTGYKGPLCI) folds into the EGF-like 1 domain. The stretch at 191–238 (HSICSACDESCKTCSGPSNKDCIQCEVGWARVEDACVDVDECAAETSP) is one FU 1 repeat. An N-linked (GlcNAc...) asparagine glycan is attached at Asn-249. Residues 251 to 298 (SYTCEDCDSTCVGCTGKGPANCKECIAGYTKESGQCTDIDECSLEEKA) form an FU 2 repeat. Positions 261 to 264 (CVGC) match the CXXC motif. 4 disulfide bridges follow: Cys-261–Cys-264, Cys-292–Cys-306, Cys-299–Cys-315, and Cys-317–Cys-328. The EGF-like 2; calcium-binding domain maps to 288–329 (DIDECSLEEKACKRKNENCYNVPGSFVCVCPEGFEETEDACV).

It belongs to the CRELD family. Interacts with CHRNA4. Component of a complex containing at least CRELD2, MANF, MATN3 and PDIA4. In terms of tissue distribution, expressed in chondrocytes (at protein level).

The protein resides in the endoplasmic reticulum. It carries out the reaction Catalyzes the rearrangement of -S-S- bonds in proteins.. In terms of biological role, protein disulfide isomerase. Might play a role in the unfolded protein response. May regulate transport of alpha4-beta2 neuronal acetylcholine receptor. The chain is Protein disulfide isomerase Creld2 (Creld2) from Mus musculus (Mouse).